The chain runs to 338 residues: Phenylalanine--tRNA ligase alpha subunit (338 aa).

Glu253 provides a ligand contact to Mg(2+).

It belongs to the class-II aminoacyl-tRNA synthetase family. Phe-tRNA synthetase alpha subunit type 1 subfamily. As to quaternary structure, tetramer of two alpha and two beta subunits. Mg(2+) serves as cofactor.

The protein localises to the cytoplasm. It catalyses the reaction tRNA(Phe) + L-phenylalanine + ATP = L-phenylalanyl-tRNA(Phe) + AMP + diphosphate + H(+). This is Phenylalanine--tRNA ligase alpha subunit from Syntrophus aciditrophicus (strain SB).